The chain runs to 359 residues: Peptide chain release factor 1 (359 aa).

Position 236 is an N5-methylglutamine (Gln236).

This sequence belongs to the prokaryotic/mitochondrial release factor family. Post-translationally, methylated by PrmC. Methylation increases the termination efficiency of RF1.

It localises to the cytoplasm. Peptide chain release factor 1 directs the termination of translation in response to the peptide chain termination codons UAG and UAA. The protein is Peptide chain release factor 1 of Streptococcus pyogenes serotype M6 (strain ATCC BAA-946 / MGAS10394).